The chain runs to 433 residues: Serine/threonine-protein kinase KDX1 (433 aa).

Positions F23–L318 constitute a Protein kinase domain. Residues I29–I37 and K55 each bind ATP. D153 (proton acceptor) is an active-site residue.

The protein belongs to the protein kinase superfamily. Ser/Thr protein kinase family. In terms of assembly, interacts with RLM1.

It catalyses the reaction L-seryl-[protein] + ATP = O-phospho-L-seryl-[protein] + ADP + H(+). It carries out the reaction L-threonyl-[protein] + ATP = O-phospho-L-threonyl-[protein] + ADP + H(+). Functionally, serine/threonine-protein kinase involved in the SLT2 mitogen-activated (MAP) kinase signaling pathway that regulates cell wall integrity. May also be involved in the mating pheromone and the CWI MAPK pathways. The sequence is that of Serine/threonine-protein kinase KDX1 (KDX1) from Saccharomyces cerevisiae (strain ATCC 204508 / S288c) (Baker's yeast).